A 295-amino-acid polypeptide reads, in one-letter code: Ethanolamine ammonia-lyase small subunit (295 aa).

Adenosylcob(III)alamin is bound by residues V207, E228, and C258.

It belongs to the EutC family. The basic unit is a heterodimer which dimerizes to form tetramers. The heterotetramers trimerize; 6 large subunits form a core ring with 6 small subunits projecting outwards. Adenosylcob(III)alamin serves as cofactor.

The protein localises to the bacterial microcompartment. The enzyme catalyses ethanolamine = acetaldehyde + NH4(+). It participates in amine and polyamine degradation; ethanolamine degradation. Functionally, catalyzes the deamination of various vicinal amino-alcohols to oxo compounds. Allows this organism to utilize ethanolamine as the sole source of nitrogen and carbon in the presence of external vitamin B12. This is Ethanolamine ammonia-lyase small subunit from Escherichia coli (strain UTI89 / UPEC).